Here is a 288-residue protein sequence, read N- to C-terminus: Chemotaxis protein methyltransferase 2 (288 aa).

The 280-residue stretch at 1-280 (MNEIVITDTD…TGYYKPHKGK (280 aa)) folds into the CheR-type methyltransferase domain. S-adenosyl-L-methionine-binding positions include asparagine 76, threonine 78, arginine 82, glutamate 119, aspartate 145, 200–201 (NL), and 219–220 (RN).

It carries out the reaction L-glutamyl-[protein] + S-adenosyl-L-methionine = [protein]-L-glutamate 5-O-methyl ester + S-adenosyl-L-homocysteine. Its function is as follows. Methylation of the membrane-bound methyl-accepting chemotaxis proteins (MCP) to form gamma-glutamyl methyl ester residues in MCP. This Vibrio cholerae serotype O1 (strain ATCC 39315 / El Tor Inaba N16961) protein is Chemotaxis protein methyltransferase 2 (cheR2).